Here is a 154-residue protein sequence, read N- to C-terminus: Myoglobin (154 aa).

The 147-residue stretch at 2-148 folds into the Globin domain; sequence GLSDGEWQLV…FRHDMAAKYK (147 aa). The residue at position 4 (serine 4) is a Phosphoserine. Histidine 65 contacts nitrite. Histidine 65 serves as a coordination point for O2. Threonine 68 is modified (phosphothreonine). A heme b-binding site is contributed by histidine 94.

Belongs to the globin family. In terms of assembly, monomeric.

It is found in the cytoplasm. The protein resides in the sarcoplasm. It catalyses the reaction Fe(III)-heme b-[protein] + nitric oxide + H2O = Fe(II)-heme b-[protein] + nitrite + 2 H(+). It carries out the reaction H2O2 + AH2 = A + 2 H2O. Functionally, monomeric heme protein which primary function is to store oxygen and facilitate its diffusion within muscle tissues. Reversibly binds oxygen through a pentacoordinated heme iron and enables its timely and efficient release as needed during periods of heightened demand. Depending on the oxidative conditions of tissues and cells, and in addition to its ability to bind oxygen, it also has a nitrite reductase activity whereby it regulates the production of bioactive nitric oxide. Under stress conditions, like hypoxia and anoxia, it also protects cells against reactive oxygen species thanks to its pseudoperoxidase activity. The protein is Myoglobin (MB) of Osphranter rufus (Red kangaroo).